We begin with the raw amino-acid sequence, 329 residues long: Quinone-oxidoreductase homolog, chloroplastic (329 aa).

The protein belongs to the zinc-containing alcohol dehydrogenase family. Quinone oxidoreductase subfamily. The transit peptide is not cleaved.

It localises to the plastid. The protein resides in the chloroplast inner membrane. The sequence is that of Quinone-oxidoreductase homolog, chloroplastic (QOR) from Spinacia oleracea (Spinach).